The chain runs to 909 residues: Villin-1 (909 aa).

6 Gelsolin-like repeats span residues 29–79 (KQLI…VDSI), 149–189 (VRVK…QEKA), 262–305 (GNLH…TERK), 391–448 (LKVW…QDRA), 529–569 (MQAI…SDHE), and 631–672 (LKVK…KSKE). Disordered regions lie at residues 733 to 781 (SLKG…CSSE) and 816 to 835 (DGVA…QKPR). Basic and acidic residues predominate over residues 752–762 (QSKDNASRDLQ). Phosphoserine is present on Ser-780. Residues 844–909 (SLESLAYSYE…NKLKISLHLF (66 aa)) form the HP domain.

This sequence belongs to the villin/gelsolin family. As to expression, expressed in all tissues examined. Mainly detected in the vascular tissue and the pericycle of roots and in the vasculature of leaves. Not expressed in the root cap.

It is found in the cytoplasm. Its subcellular location is the cytoskeleton. Its function is as follows. Binds actin and actin filament bundles in a Ca(2+)/calmodulin-insensitive manner, but is unable to sever, cap, and nucleate actin filament formation in vitro. Does not protect individual filaments from severing by VLN3 (AC O81645). This chain is Villin-1, found in Arabidopsis thaliana (Mouse-ear cress).